The primary structure comprises 281 residues: Probable endonuclease 4 (281 aa).

9 residues coordinate Zn(2+): His69, His109, Glu145, Asp179, His182, His216, Asp229, His231, and Glu261.

It belongs to the AP endonuclease 2 family. Zn(2+) is required as a cofactor.

The enzyme catalyses Endonucleolytic cleavage to 5'-phosphooligonucleotide end-products.. Endonuclease IV plays a role in DNA repair. It cleaves phosphodiester bonds at apurinic or apyrimidinic (AP) sites, generating a 3'-hydroxyl group and a 5'-terminal sugar phosphate. This Pectobacterium atrosepticum (strain SCRI 1043 / ATCC BAA-672) (Erwinia carotovora subsp. atroseptica) protein is Probable endonuclease 4.